A 225-amino-acid chain; its full sequence is Adenosylcobinamide-GDP ribazoletransferase (225 aa).

5 consecutive transmembrane segments (helical) span residues 34–54 (FVGI…FWFL), 93–113 (NLGT…FYSF), 116–136 (VSAF…LLLL), 165–185 (PLLL…AITI), and 204–224 (VVGA…YFLA).

It belongs to the CobS family. It depends on Mg(2+) as a cofactor.

The protein localises to the cell membrane. The catalysed reaction is alpha-ribazole + adenosylcob(III)inamide-GDP = adenosylcob(III)alamin + GMP + H(+). The enzyme catalyses alpha-ribazole 5'-phosphate + adenosylcob(III)inamide-GDP = adenosylcob(III)alamin 5'-phosphate + GMP + H(+). The protein operates within cofactor biosynthesis; adenosylcobalamin biosynthesis; adenosylcobalamin from cob(II)yrinate a,c-diamide: step 7/7. Functionally, joins adenosylcobinamide-GDP and alpha-ribazole to generate adenosylcobalamin (Ado-cobalamin). Also synthesizes adenosylcobalamin 5'-phosphate from adenosylcobinamide-GDP and alpha-ribazole 5'-phosphate. This is Adenosylcobinamide-GDP ribazoletransferase (cobS1) from Archaeoglobus fulgidus (strain ATCC 49558 / DSM 4304 / JCM 9628 / NBRC 100126 / VC-16).